The primary structure comprises 1516 residues: Myosin-52 (1516 aa).

Positions 7 to 62 constitute a Myosin N-terminal SH3-like domain; sequence YKGLQCWIPDEQSQWIPGSIKDCRVEGEKAFLTVQDENENETVITVKPDDLNYEGR. The Myosin motor domain maps to 73–766; it reads SDADDLTDLS…VTPLLESARD (694 aa). ATP is bound at residue 167-174; it reads GESGAGKT. The tract at residues 647–669 is actin-binding; the sequence is LVSLMSTINETNAHYIRCIKPNE. IQ domains lie at 793–813, 818–838, 840–865, 866–886, and 888–917; these read RKRV…RHTE, SSNI…KEFI, TKNS…EKTK, HDAT…KHYK, and LQYY…ESTK. Residues 926–1034 adopt a coiled-coil conformation; it reads YRLESRLFEI…LKSQLKNYDM (109 aa). Phosphoserine occurs at positions 1065 and 1072. Residues 1163 to 1431 form the Dilute domain; it reads ERYCVHTLEY…SELSKNIVAE (269 aa).

It belongs to the TRAFAC class myosin-kinesin ATPase superfamily. Myosin family.

Its subcellular location is the cytoplasm. Functionally, involved in cell wall deposition where it has a role in the localization of mok1. This is Myosin-52 (myo52) from Schizosaccharomyces pombe (strain 972 / ATCC 24843) (Fission yeast).